Consider the following 428-residue polypeptide: Light-independent protochlorophyllide reductase subunit N (428 aa).

Residues Cys31, Cys56, and Cys117 each coordinate [4Fe-4S] cluster.

The protein belongs to the BchN/ChlN family. Protochlorophyllide reductase is composed of three subunits; BchL, BchN and BchB. Forms a heterotetramer of two BchB and two BchN subunits. Requires [4Fe-4S] cluster as cofactor.

It catalyses the reaction chlorophyllide a + oxidized 2[4Fe-4S]-[ferredoxin] + 2 ADP + 2 phosphate = protochlorophyllide a + reduced 2[4Fe-4S]-[ferredoxin] + 2 ATP + 2 H2O. It participates in porphyrin-containing compound metabolism; bacteriochlorophyll biosynthesis (light-independent). In terms of biological role, component of the dark-operative protochlorophyllide reductase (DPOR) that uses Mg-ATP and reduced ferredoxin to reduce ring D of protochlorophyllide (Pchlide) to form chlorophyllide a (Chlide). This reaction is light-independent. The NB-protein (BchN-BchB) is the catalytic component of the complex. The polypeptide is Light-independent protochlorophyllide reductase subunit N (Rhodopseudomonas palustris (strain BisB18)).